Reading from the N-terminus, the 144-residue chain is UPF0178 protein Exig_1155 (144 aa).

The interval Ile110–Asp144 is disordered. Residues Ala113 to Thr124 show a composition bias toward basic residues.

The protein belongs to the UPF0178 family.

The polypeptide is UPF0178 protein Exig_1155 (Exiguobacterium sibiricum (strain DSM 17290 / CCUG 55495 / CIP 109462 / JCM 13490 / 255-15)).